Reading from the N-terminus, the 68-residue chain is Large ribosomal subunit protein bL31 (68 aa).

Zn(2+)-binding residues include cysteine 16, cysteine 18, cysteine 38, and cysteine 41.

Belongs to the bacterial ribosomal protein bL31 family. Type A subfamily. Part of the 50S ribosomal subunit. It depends on Zn(2+) as a cofactor.

Functionally, binds the 23S rRNA. The chain is Large ribosomal subunit protein bL31 from Thiobacillus denitrificans (strain ATCC 25259 / T1).